The primary structure comprises 452 residues: GATA-binding factor 2 (452 aa).

The disordered stretch occupies residues 130–182; sequence GGSLYPGTGSSACPSSSHSSPHLFGFPPTPPKDVSPDPGPASPPSSSRLEDKD. The span at 139-151 shows a compositional bias: low complexity; that stretch reads SSACPSSSHSSPH. Residues 156-172 are compositionally biased toward pro residues; that stretch reads PPTPPKDVSPDPGPASP. 2 GATA-type zinc fingers span residues 267–291 and 321–345; these read CVNC…CNAC and CANC…CNAC. Residues 426–438 are compositionally biased toward polar residues; the sequence is QTPTPIHPSSSLS. Residues 426–452 are disordered; sequence QTPTPIHPSSSLSFGHPHHSSMVTAMG.

As to expression, expressed in the developing ventral blood island, and in the embryonic nervous system.

The protein localises to the nucleus. This is GATA-binding factor 2 (gata2) from Xenopus laevis (African clawed frog).